The sequence spans 1418 residues: Protein ced-11 (1418 aa).

A run of 7 helical transmembrane segments spans residues 617-637 (FPIF…IIPV), 755-775 (YWLS…SVVL), 782-802 (LWDT…CFVL), 818-838 (VFDV…KVFP), 856-876 (VVSA…YIPL), 898-918 (FLFM…AVVF), and 986-1006 (IVIE…FAFF).

Its subcellular location is the membrane. Plays a major role in programmed cell death. This is Protein ced-11 (ced-11) from Caenorhabditis elegans.